Reading from the N-terminus, the 372-residue chain is Alanine racemase (372 aa).

The Proton acceptor; specific for D-alanine role is filled by Lys41. Lys41 bears the N6-(pyridoxal phosphate)lysine mark. Arg139 serves as a coordination point for substrate. The active-site Proton acceptor; specific for L-alanine is Tyr268. Met316 provides a ligand contact to substrate.

The protein belongs to the alanine racemase family. The cofactor is pyridoxal 5'-phosphate.

It carries out the reaction L-alanine = D-alanine. It participates in amino-acid biosynthesis; D-alanine biosynthesis; D-alanine from L-alanine: step 1/1. Catalyzes the interconversion of L-alanine and D-alanine. May also act on other amino acids. This Borreliella burgdorferi (strain ATCC 35210 / DSM 4680 / CIP 102532 / B31) (Borrelia burgdorferi) protein is Alanine racemase (alr).